We begin with the raw amino-acid sequence, 200 residues long: Large ribosomal subunit protein uL4 (200 aa).

The segment at 42–65 (TRAQKTRSEVSGGGAKPWRQKGTG) is disordered.

Belongs to the universal ribosomal protein uL4 family. In terms of assembly, part of the 50S ribosomal subunit.

Its function is as follows. One of the primary rRNA binding proteins, this protein initially binds near the 5'-end of the 23S rRNA. It is important during the early stages of 50S assembly. It makes multiple contacts with different domains of the 23S rRNA in the assembled 50S subunit and ribosome. In terms of biological role, forms part of the polypeptide exit tunnel. The chain is Large ribosomal subunit protein uL4 from Vibrio atlanticus (strain LGP32) (Vibrio splendidus (strain Mel32)).